The following is an 84-amino-acid chain: MKVIDIANRRRIYFEMKQQELRASILMTVAGFIIAFAILVFQISFELGHLYHYIVTFAFLTYLSLHLYSNNKLARKIEKKQQGY.

A helical membrane pass occupies residues 25 to 45 (ILMTVAGFIIAFAILVFQISF).

The protein localises to the membrane. This is an uncharacterized protein from Bacillus anthracis.